The sequence spans 195 residues: Holliday junction branch migration complex subunit RuvA (195 aa).

Positions 1–66 are domain I; the sequence is MNYLIFKVIY…LIIKDLYGFR (66 aa). Residues 67–141 are domain II; the sequence is TYNERLLFID…KYINKVNDKN (75 aa). A region of interest (flexible linker) is located at residue N141. Residues 141–195 form a domain III region; it reads NNWAKELSIGLENLGYTKKDIEYAITKVKINSQQDIDISEIISSAIKEISLRHEN.

This sequence belongs to the RuvA family. Homotetramer. Forms an RuvA(8)-RuvB(12)-Holliday junction (HJ) complex. HJ DNA is sandwiched between 2 RuvA tetramers; dsDNA enters through RuvA and exits via RuvB. An RuvB hexamer assembles on each DNA strand where it exits the tetramer. Each RuvB hexamer is contacted by two RuvA subunits (via domain III) on 2 adjacent RuvB subunits; this complex drives branch migration. In the full resolvosome a probable DNA-RuvA(4)-RuvB(12)-RuvC(2) complex forms which resolves the HJ.

It localises to the cytoplasm. Its function is as follows. The RuvA-RuvB-RuvC complex processes Holliday junction (HJ) DNA during genetic recombination and DNA repair, while the RuvA-RuvB complex plays an important role in the rescue of blocked DNA replication forks via replication fork reversal (RFR). RuvA specifically binds to HJ cruciform DNA, conferring on it an open structure. The RuvB hexamer acts as an ATP-dependent pump, pulling dsDNA into and through the RuvAB complex. HJ branch migration allows RuvC to scan DNA until it finds its consensus sequence, where it cleaves and resolves the cruciform DNA. The polypeptide is Holliday junction branch migration complex subunit RuvA (Ureaplasma parvum serovar 3 (strain ATCC 27815 / 27 / NCTC 11736)).